The sequence spans 296 residues: tRNA dimethylallyltransferase (296 aa).

9–16 (GPTAVGKT) provides a ligand contact to ATP. 11–16 (TAVGKT) lines the substrate pocket. The segment at 34-37 (DSRQ) is interaction with substrate tRNA.

The protein belongs to the IPP transferase family. As to quaternary structure, monomer. The cofactor is Mg(2+).

The enzyme catalyses adenosine(37) in tRNA + dimethylallyl diphosphate = N(6)-dimethylallyladenosine(37) in tRNA + diphosphate. In terms of biological role, catalyzes the transfer of a dimethylallyl group onto the adenine at position 37 in tRNAs that read codons beginning with uridine, leading to the formation of N6-(dimethylallyl)adenosine (i(6)A). The polypeptide is tRNA dimethylallyltransferase (Chloroflexus aggregans (strain MD-66 / DSM 9485)).